The chain runs to 208 residues: Translation initiation factor 2 subunit beta (208 aa).

Positions 145-203 (VIEEGETYELRIESVGSKGDGIAKVDKYLIFVPNTSKGEIVKAKVKKISGTLAFAEIVE) constitute a TRAM domain.

Belongs to the eIF-2-beta/eIF-5 family. As to quaternary structure, heterotrimer composed of an alpha, a beta and a gamma chain.

Functionally, eIF-2 functions in the early steps of protein synthesis by forming a ternary complex with GTP and initiator tRNA. In Methanothrix thermoacetophila (strain DSM 6194 / JCM 14653 / NBRC 101360 / PT) (Methanosaeta thermophila), this protein is Translation initiation factor 2 subunit beta.